The chain runs to 296 residues: Ribosomal RNA small subunit methyltransferase H (296 aa).

Residues 41–43 (GGH), aspartate 60, phenylalanine 87, aspartate 103, and glutamine 110 contribute to the S-adenosyl-L-methionine site.

This sequence belongs to the methyltransferase superfamily. RsmH family.

It localises to the cytoplasm. It carries out the reaction cytidine(1402) in 16S rRNA + S-adenosyl-L-methionine = N(4)-methylcytidine(1402) in 16S rRNA + S-adenosyl-L-homocysteine + H(+). Functionally, specifically methylates the N4 position of cytidine in position 1402 (C1402) of 16S rRNA. The polypeptide is Ribosomal RNA small subunit methyltransferase H (Synechococcus elongatus (strain ATCC 33912 / PCC 7942 / FACHB-805) (Anacystis nidulans R2)).